We begin with the raw amino-acid sequence, 217 residues long: Small ribosomal subunit protein uS3 (217 aa).

A KH type-2 domain is found at 24–93; the sequence is IKEFLEYKLS…NPQIDVIDVS (70 aa).

This sequence belongs to the universal ribosomal protein uS3 family. Part of the 30S ribosomal subunit.

Binds the lower part of the 30S subunit head. The protein is Small ribosomal subunit protein uS3 of Pyrobaculum islandicum (strain DSM 4184 / JCM 9189 / GEO3).